Consider the following 562-residue polypeptide: NAD-dependent malic enzyme (562 aa).

Residue Tyr101 is the Proton donor of the active site. Residue Arg154 coordinates NAD(+). Lys172 acts as the Proton acceptor in catalysis. 3 residues coordinate a divalent metal cation: Glu243, Asp244, and Asp267. NAD(+)-binding residues include Asp267 and Asn415.

Belongs to the malic enzymes family. In terms of assembly, homotetramer. Requires Mg(2+) as cofactor. Mn(2+) is required as a cofactor.

It catalyses the reaction (S)-malate + NAD(+) = pyruvate + CO2 + NADH. The catalysed reaction is oxaloacetate + H(+) = pyruvate + CO2. This is NAD-dependent malic enzyme from Shewanella baltica (strain OS155 / ATCC BAA-1091).